The sequence spans 629 residues: MSTAVRICVCGDEGTGKSSLIASLVKGVFVANKIQAVLPQVTIPPTTGTPENVTTTIVDTSARPQDRTTLRKEIRKSNVILLVYSDHYSYERVALFWMPYFRSLGVNVPVVLCANKSDLVSDGNAAQVAEEEMLPVMAEFREIDSCIRTSAKEQKNVIEVFYLCQKAVTHPIAPLFDYKEGQLKPACVDALRRIFFLSDKDQDGYLNDQEMQDFQQKSFDKPLSQEDLDNIKLTVSKSVPSSSTDKGLDLRGFLQLNKLYAEKGRHETIWIILRKYHYTDSLSLEDSFLHPRFDVPDYASAELSPAGYRFFMDLFLTFDKDNDGGLNDRELAALFAPTPGLPHSWAETSFPSTTVRNEAGHITLQGWLAQWSMTTFLEPKTTLEYLAYLGFETPNARETTTAALKITKPRKRRRRPGRVDRNVVLCYILGSSGAGKSSLLDVFLNRPFDTLYHPTIKPRQAVNSVELQGGKQCYLILEELGELEPAILENQAKLDACDLICYAYDSSEPDSFSHIVELRKRYPQLDELPAVYTALKADRDKTTQRSELQPDAYTAALNMSAPLHVSVTWNSISELFVALAEAATNPSTAFPRSEEPPADRASLYMALGATACAALAAFMIWRRSTSNAA.

Over 1 to 600 (MSTAVRICVC…PRSEEPPADR (600 aa)) the chain is Cytoplasmic. A Miro 1 domain is found at 2–170 (STAVRICVCG…FYLCQKAVTH (169 aa)). GTP-binding positions include 11 to 18 (GDEGTGKS), 59 to 63 (DTSAR), and 115 to 118 (NKSD). EF-hand domains are found at residues 186–221 (ACVDALRRIFFLSDKDQDGYLNDQEMQDFQQKSFDK) and 306–341 (AGYRFFMDLFLTFDKDNDGGLNDRELAALFAPTPGL). D199, D201, D203, Y205, E210, D319, D321, D323, and E330 together coordinate Ca(2+). Residues 421-585 (RNVVLCYILG…FVALAEAATN (165 aa)) form the Miro 2 domain. GTP-binding positions include 430–437 (GSSGAGKS), 466–470 (ELQGG), and 535–538 (LKAD). The chain crosses the membrane as a helical; Anchor for type IV membrane protein span at residues 601–621 (ASLYMALGATACAALAAFMIW). Over 622–629 (RRSTSNAA) the chain is Mitochondrial intermembrane.

The protein belongs to the mitochondrial Rho GTPase family.

It localises to the mitochondrion outer membrane. Mitochondrial GTPase involved in mitochondrial trafficking. Probably involved in control of anterograde transport of mitochondria and their subcellular distribution. The protein is Mitochondrial Rho GTPase 1 (gem-1) of Neurospora crassa (strain ATCC 24698 / 74-OR23-1A / CBS 708.71 / DSM 1257 / FGSC 987).